Consider the following 521-residue polypeptide: Bifunctional purine biosynthesis protein PurH (521 aa).

The 145-residue stretch at 1–145 (MIKQALISVS…KNHRDVTVVV (145 aa)) folds into the MGS-like domain.

The protein belongs to the PurH family.

The enzyme catalyses (6R)-10-formyltetrahydrofolate + 5-amino-1-(5-phospho-beta-D-ribosyl)imidazole-4-carboxamide = 5-formamido-1-(5-phospho-D-ribosyl)imidazole-4-carboxamide + (6S)-5,6,7,8-tetrahydrofolate. It carries out the reaction IMP + H2O = 5-formamido-1-(5-phospho-D-ribosyl)imidazole-4-carboxamide. The protein operates within purine metabolism; IMP biosynthesis via de novo pathway; 5-formamido-1-(5-phospho-D-ribosyl)imidazole-4-carboxamide from 5-amino-1-(5-phospho-D-ribosyl)imidazole-4-carboxamide (10-formyl THF route): step 1/1. It participates in purine metabolism; IMP biosynthesis via de novo pathway; IMP from 5-formamido-1-(5-phospho-D-ribosyl)imidazole-4-carboxamide: step 1/1. The sequence is that of Bifunctional purine biosynthesis protein PurH from Burkholderia ambifaria (strain MC40-6).